We begin with the raw amino-acid sequence, 239 residues long: tRNA (guanine-N(1)-)-methyltransferase (239 aa).

S-adenosyl-L-methionine-binding positions include Gly108 and 128-133 (VGNFIV).

The protein belongs to the RNA methyltransferase TrmD family. As to quaternary structure, homodimer.

Its subcellular location is the cytoplasm. It carries out the reaction guanosine(37) in tRNA + S-adenosyl-L-methionine = N(1)-methylguanosine(37) in tRNA + S-adenosyl-L-homocysteine + H(+). Functionally, specifically methylates guanosine-37 in various tRNAs. The sequence is that of tRNA (guanine-N(1)-)-methyltransferase from Helicobacter hepaticus (strain ATCC 51449 / 3B1).